Consider the following 171-residue polypeptide: UPF0398 protein STER_0279 (171 aa).

The protein belongs to the UPF0398 family.

The chain is UPF0398 protein STER_0279 from Streptococcus thermophilus (strain ATCC BAA-491 / LMD-9).